The sequence spans 302 residues: tRNA-cytidine(32) 2-sulfurtransferase (302 aa).

Positions 44–49 match the PP-loop motif motif; that stretch reads SGGKDS. Residues Cys-119, Cys-122, and Cys-210 each coordinate [4Fe-4S] cluster.

It belongs to the TtcA family. In terms of assembly, homodimer. Mg(2+) serves as cofactor. [4Fe-4S] cluster is required as a cofactor.

The protein resides in the cytoplasm. It catalyses the reaction cytidine(32) in tRNA + S-sulfanyl-L-cysteinyl-[cysteine desulfurase] + AH2 + ATP = 2-thiocytidine(32) in tRNA + L-cysteinyl-[cysteine desulfurase] + A + AMP + diphosphate + H(+). It functions in the pathway tRNA modification. Catalyzes the ATP-dependent 2-thiolation of cytidine in position 32 of tRNA, to form 2-thiocytidine (s(2)C32). The sulfur atoms are provided by the cysteine/cysteine desulfurase (IscS) system. In Tolumonas auensis (strain DSM 9187 / NBRC 110442 / TA 4), this protein is tRNA-cytidine(32) 2-sulfurtransferase.